Reading from the N-terminus, the 424-residue chain is uncharacterized protein (424 aa).

It belongs to the serpin family.

This is an uncharacterized protein from Methanosarcina acetivorans (strain ATCC 35395 / DSM 2834 / JCM 12185 / C2A).